We begin with the raw amino-acid sequence, 428 residues long: Adenosylmethionine-8-amino-7-oxononanoate aminotransferase (428 aa).

Residue Trp52 participates in substrate binding. A pyridoxal 5'-phosphate-binding site is contributed by 112–113 (GS). Tyr144 is a binding site for substrate. Residue Asp245 coordinates pyridoxal 5'-phosphate. Substrate contacts are provided by Lys274 and Gly307. Lys274 is modified (N6-(pyridoxal phosphate)lysine). Pyridoxal 5'-phosphate is bound at residue 308 to 309 (PT). Substrate is bound at residue Arg391.

The protein belongs to the class-III pyridoxal-phosphate-dependent aminotransferase family. BioA subfamily. Homodimer. The cofactor is pyridoxal 5'-phosphate.

Its subcellular location is the cytoplasm. The catalysed reaction is (8S)-8-amino-7-oxononanoate + S-adenosyl-L-methionine = S-adenosyl-4-methylsulfanyl-2-oxobutanoate + (7R,8S)-7,8-diammoniononanoate. It participates in cofactor biosynthesis; biotin biosynthesis; 7,8-diaminononanoate from 8-amino-7-oxononanoate (SAM route): step 1/1. Catalyzes the transfer of the alpha-amino group from S-adenosyl-L-methionine (SAM) to 7-keto-8-aminopelargonic acid (KAPA) to form 7,8-diaminopelargonic acid (DAPA). It is the only aminotransferase known to utilize SAM as an amino donor. The polypeptide is Adenosylmethionine-8-amino-7-oxononanoate aminotransferase (Buchnera aphidicola subsp. Acyrthosiphon pisum (strain APS) (Acyrthosiphon pisum symbiotic bacterium)).